The chain runs to 267 residues: Dihydropteroate synthase (267 aa).

Positions 1–251 constitute a Pterin-binding domain; the sequence is MTKTKIMGIL…NVELNAKLAK (251 aa). Asn11 lines the Mg(2+) pocket. Residues Thr51, Asp84, Asn103, Asp167, Lys203, and 239-241 contribute to the (7,8-dihydropterin-6-yl)methyl diphosphate site; that span reads RVH.

The protein belongs to the DHPS family. Homodimer. It depends on Mg(2+) as a cofactor.

It catalyses the reaction (7,8-dihydropterin-6-yl)methyl diphosphate + 4-aminobenzoate = 7,8-dihydropteroate + diphosphate. The protein operates within cofactor biosynthesis; tetrahydrofolate biosynthesis; 7,8-dihydrofolate from 2-amino-4-hydroxy-6-hydroxymethyl-7,8-dihydropteridine diphosphate and 4-aminobenzoate: step 1/2. Functionally, catalyzes the condensation of para-aminobenzoate (pABA) with 6-hydroxymethyl-7,8-dihydropterin diphosphate (DHPt-PP) to form 7,8-dihydropteroate (H2Pte), the immediate precursor of folate derivatives. This chain is Dihydropteroate synthase (folP), found in Staphylococcus aureus (strain MRSA252).